Consider the following 308-residue polypeptide: Snake venom metalloprotease inhibitor 02D01 (308 aa).

An N-terminal signal peptide occupies residues 1-23 (MFVSRLAASGLLLLSLLALSLDG). Residues 24 to 38 (KPLPQRQPHHIQPME) constitute a propeptide that is removed on maturation. The residue at position 39 (Q39) is a Pyrrolidone carboxylic acid. Positions 42–50 (LAPDAPPLE) are excised as a propeptide. Q51 bears the Pyrrolidone carboxylic acid mark. Residues 54 to 62 (LAPDAPPLE) constitute a propeptide that is removed on maturation. Pyrrolidone carboxylic acid is present on Q63. A propeptide spanning residues 66-74 (LAPAAPPLE) is cleaved from the precursor. Q75 is subject to Pyrrolidone carboxylic acid. Positions 78 to 86 (LAPDAPPME) are excised as a propeptide. A Pyrrolidone carboxylic acid modification is found at Q87. A propeptide spanning residues 90 to 98 (LAPDAPPME) is cleaved from the precursor. Q99 bears the Pyrrolidone carboxylic acid mark. Residues 102 to 110 (LAPDAPPME) constitute a propeptide that is removed on maturation. Q111 bears the Pyrrolidone carboxylic acid mark. A propeptide spanning residues 114–122 (LAPDAPPME) is cleaved from the precursor. Position 123 is a pyrrolidone carboxylic acid (Q123). Positions 126–134 (LAPDAAPLE) are excised as a propeptide. Q135 is subject to Pyrrolidone carboxylic acid. The propeptide occupies 138-146 (LAPDAPPME). Q147 is modified (pyrrolidone carboxylic acid). A propeptide spanning residues 150 to 158 (LAPDAPPME) is cleaved from the precursor. Q159 is subject to Pyrrolidone carboxylic acid. A propeptide spanning residues 162–249 (QPQIPSLMEQ…KQASQKWGRL (88 aa)) is cleaved from the precursor. Residues 172–182 (RQLSSGGTTAL) are compositionally biased toward polar residues. 2 disordered regions span residues 172-228 (RQLS…AAAT) and 252-279 (HDHD…GARR). Gly residues predominate over residues 198–209 (VVGGGGGGGGGS). Over residues 210-227 (KAALALPKPPKAKGAAAA) the composition is skewed to low complexity. A compositionally biased stretch (gly residues) spans 265–277 (SVGGGGGGGGGGA). Positions 278–286 (RRLKGLAKK) are excised as a propeptide. An intrachain disulfide couples C292 to C308.

The protein in the C-terminal section; belongs to the natriuretic peptide family. It in the central section; belongs to the pHpG family. In terms of tissue distribution, expressed by the venom gland.

It localises to the secreted. Its function is as follows. pEKW and poly-His-poly-Gly peptides may serve as metalloproteinase inhibitors during glandular storage. Their inhibition may be instantly disengaged, by dilution or physiochemical change, when venom is injected into tissue of the prey. Functionally, has a vasorelaxant activity in rat aortic strips and a diuretic potency in anesthetized rats. May act by activating natriuretic receptors (NPR1 and/or NPR2). The protein is Snake venom metalloprotease inhibitor 02D01 of Echis ocellatus (Ocellated saw-scaled viper).